We begin with the raw amino-acid sequence, 1180 residues long: Tudor domain-containing protein 1 (1180 aa).

Disordered regions lie at residues 1–66 and 79–138; these read MSVK…KKNN and SQED…RPAK. Residues 27 to 41 show a composition bias toward basic and acidic residues; sequence NFEKNENKLPPHESL. Composition is skewed to polar residues over residues 79–91 and 110–122; these read SQED…NPNG and NSVS…SNSP. 8 residues coordinate Zn(2+): Cys-170, Cys-173, Cys-181, Cys-184, Cys-190, Cys-194, His-202, and Cys-206. Residues 170 to 206 form an MYND-type zinc finger; that stretch reads CHRCGLFGSLRCSQCKQTYYCSTACQRRDWSAHSIVC. Positions 312-372 constitute a Tudor 1 domain; it reads IPVKGEVCIA…YHLNRNIDLF (61 aa). The disordered stretch occupies residues 450 to 469; sequence SGQDSKKENADQSDPEDVGK. 3 Tudor domains span residues 541-600, 762-821, and 990-1048; these read YPAI…LLEL, KAEI…FLNL, and RPRI…HLAL.

The protein belongs to the TDRD1 family. In terms of assembly, found in a mRNP complex, at least composed of TDRD1, TDRD6, TDRD7 and DDX4. Interacts with MAEL. Interacts with PIWIL1, PIWIL2 and PIWIL4 (when methylated on arginine residues). Interacts with TDRD12. Testis and ovary specific. Also expressed in several cancers.

The protein resides in the cytoplasm. Its function is as follows. Plays a central role during spermatogenesis by participating in the repression transposable elements and preventing their mobilization, which is essential for the germline integrity. Acts via the piRNA metabolic process, which mediates the repression of transposable elements during meiosis by forming complexes composed of piRNAs and Piwi proteins and governs the methylation and subsequent repression of transposons. Required for the localization of Piwi proteins to the meiotic nuage. Involved in the piRNA metabolic process by ensuring the entry of correct transcripts into the normal piRNA pool and limiting the entry of cellular transcripts into the piRNA pathway. May act by allowing the recruitment of piRNA biogenesis or loading factors that ensure the correct entry of transcripts and piRNAs into Piwi proteins. The chain is Tudor domain-containing protein 1 (TDRD1) from Homo sapiens (Human).